A 128-amino-acid polypeptide reads, in one-letter code: Aspartate 1-decarboxylase (128 aa).

S25 (schiff-base intermediate with substrate; via pyruvic acid) is an active-site residue. S25 carries the pyruvic acid (Ser) modification. T57 is a binding site for substrate. Y58 serves as the catalytic Proton donor. Position 73–75 (73–75) interacts with substrate; that stretch reads GSA.

This sequence belongs to the PanD family. In terms of assembly, heterooctamer of four alpha and four beta subunits. Requires pyruvate as cofactor. Is synthesized initially as an inactive proenzyme, which is activated by self-cleavage at a specific serine bond to produce a beta-subunit with a hydroxyl group at its C-terminus and an alpha-subunit with a pyruvoyl group at its N-terminus.

It localises to the cytoplasm. The catalysed reaction is L-aspartate + H(+) = beta-alanine + CO2. The protein operates within cofactor biosynthesis; (R)-pantothenate biosynthesis; beta-alanine from L-aspartate: step 1/1. Catalyzes the pyruvoyl-dependent decarboxylation of aspartate to produce beta-alanine. This chain is Aspartate 1-decarboxylase, found in Burkholderia cenocepacia (strain HI2424).